We begin with the raw amino-acid sequence, 257 residues long: Hydroxyacylglutathione hydrolase (257 aa).

Residues His-54, His-56, Asp-58, His-59, His-113, Asp-137, and His-175 each contribute to the Zn(2+) site.

Belongs to the metallo-beta-lactamase superfamily. Glyoxalase II family. Monomer. It depends on Zn(2+) as a cofactor.

The enzyme catalyses an S-(2-hydroxyacyl)glutathione + H2O = a 2-hydroxy carboxylate + glutathione + H(+). The protein operates within secondary metabolite metabolism; methylglyoxal degradation; (R)-lactate from methylglyoxal: step 2/2. Its function is as follows. Thiolesterase that catalyzes the hydrolysis of S-D-lactoyl-glutathione to form glutathione and D-lactic acid. The protein is Hydroxyacylglutathione hydrolase of Crocosphaera subtropica (strain ATCC 51142 / BH68) (Cyanothece sp. (strain ATCC 51142)).